Reading from the N-terminus, the 688-residue chain is Homoaconitase, mitochondrial (688 aa).

The N-terminal 19 residues, 1 to 19 (MALLYLSTRSSLKKTGARC), are a transit peptide targeting the mitochondrion. Positions 346, 406, and 409 each coordinate [4Fe-4S] cluster.

It belongs to the aconitase/IPM isomerase family. The cofactor is [4Fe-4S] cluster.

The protein localises to the mitochondrion. The enzyme catalyses (2R,3S)-homoisocitrate = cis-homoaconitate + H2O. It functions in the pathway amino-acid biosynthesis; L-lysine biosynthesis via AAA pathway; L-alpha-aminoadipate from 2-oxoglutarate: step 3/5. In terms of biological role, catalyzes the reversible hydration of cis-homoaconitate to (2R,3S)-homoisocitrate, a step in the alpha-aminoadipate pathway for lysine biosynthesis. The protein is Homoaconitase, mitochondrial (LYS4) of Debaryomyces hansenii (strain ATCC 36239 / CBS 767 / BCRC 21394 / JCM 1990 / NBRC 0083 / IGC 2968) (Yeast).